A 159-amino-acid chain; its full sequence is 3-hydroxyacyl-[acyl-carrier-protein] dehydratase FabZ (159 aa).

The active site involves His58.

It belongs to the thioester dehydratase family. FabZ subfamily.

Its subcellular location is the cytoplasm. The catalysed reaction is a (3R)-hydroxyacyl-[ACP] = a (2E)-enoyl-[ACP] + H2O. In terms of biological role, involved in unsaturated fatty acids biosynthesis. Catalyzes the dehydration of short chain beta-hydroxyacyl-ACPs and long chain saturated and unsaturated beta-hydroxyacyl-ACPs. The protein is 3-hydroxyacyl-[acyl-carrier-protein] dehydratase FabZ of Helicobacter pylori (strain HPAG1).